A 331-amino-acid chain; its full sequence is Olfactory receptor 10S1 (331 aa).

The Extracellular portion of the chain corresponds to 1-38 (MTSRSVCEKMTMTTENPNQTVVSHFFLEGLRYTAKHSS). Asn-18 carries an N-linked (GlcNAc...) asparagine glycan. Residues 39–59 (LFFLLFLLIYSITVAGNLLIL) traverse the membrane as a helical segment. Residues 60–67 (LTVGSDSH) are Cytoplasmic-facing. The helical transmembrane segment at 68–88 (LSLPMYHFLGHLSFLDACLST) threads the bilayer. Residues 89-113 (VTVPKVMAGLLTLDGKVISFEGCAV) lie on the Extracellular side of the membrane. Cys-111 and Cys-203 are disulfide-bonded. The chain crosses the membrane as a helical span at residues 114–134 (QLYCFHFLASTECFLYTVMAY). Over 135 to 153 (DRYLAICQPLHYPVAMNRR) the chain is Cytoplasmic. A helical transmembrane segment spans residues 154-174 (MCAEMAGITWAIGATHAAIHT). Residues 175 to 211 (SLTFRLLYCGPCHIAYFFCDIPPVLKLACTDTTINEL) lie on the Extracellular side of the membrane. A helical membrane pass occupies residues 212–231 (VMLASIGIVAAGCLILIVIS). At 232–251 (YIFIVAAVLRIRTAQGRQRA) the chain is on the cytoplasmic side. Residues 252 to 272 (FSPCTAQLTGVLLYYVPPVCI) form a helical membrane-spanning segment. The Extracellular portion of the chain corresponds to 273 to 283 (YLQPRSSEAGA). Residues 284 to 304 (GAPAVFYTIVTPMLNPFIYTL) form a helical membrane-spanning segment. Topologically, residues 305–331 (RNKEVKHALQRLLCSSFRESTAGSPPP) are cytoplasmic.

The protein belongs to the G-protein coupled receptor 1 family.

Its subcellular location is the cell membrane. In terms of biological role, odorant receptor. The sequence is that of Olfactory receptor 10S1 (OR10S1) from Homo sapiens (Human).